A 974-amino-acid chain; its full sequence is Serine/threonine-protein kinase 10 (974 aa).

The Protein kinase domain occupies 37-295 (WEIIGELGDG…AAQLLEHPFV (259 aa)). Residues 43–51 (LGDGAFGKV) and Lys66 contribute to the ATP site. Asp158 serves as the catalytic Proton acceptor. The span at 320–332 (EDNHEDGEDEDPA) shows a compositional bias: acidic residues. The segment at 320 to 479 (EDNHEDGEDE…EKEDHCEETQ (160 aa)) is disordered. Over residues 343-353 (DPSQTSATSLN) the composition is skewed to polar residues. Composition is skewed to basic and acidic residues over residues 382–406 (PLKEQEDNLSDKFQVEDHDKPESEA) and 458–477 (TMEKYLEKPKEPEKEDHCEE). Coiled coils occupy residues 605–729 (QKEQ…EEQK) and 870–950 (EKVK…EHLK).

Belongs to the protein kinase superfamily. STE Ser/Thr protein kinase family. STE20 subfamily. As to quaternary structure, homodimer. Autophosphorylates.

The protein localises to the cell membrane. It carries out the reaction L-seryl-[protein] + ATP = O-phospho-L-seryl-[protein] + ADP + H(+). It catalyses the reaction L-threonyl-[protein] + ATP = O-phospho-L-threonyl-[protein] + ADP + H(+). In terms of biological role, may act as a polo kinase kinase by mediating phosphorylation of plk1. In Danio rerio (Zebrafish), this protein is Serine/threonine-protein kinase 10 (stk10).